The chain runs to 463 residues: Heterogeneous nuclear ribonucleoprotein K (463 aa).

Met-1 carries the N-acetylmethionine modification. A disordered region spans residues 1–37; it reads METEQPEETFPNTETNGEFGKRPAEDMEEEQAFKRSR. Residues 1 to 276 are necessary for interaction with DDX1; sequence METEQPEETF…GRGGRPMPPS (276 aa). Basic and acidic residues predominate over residues 19 to 37; sequence FGKRPAEDMEEEQAFKRSR. Lys-34 is subject to N6-acetyllysine; alternate. Residue Lys-34 forms a Glycyl lysine isopeptide (Lys-Gly) (interchain with G-Cter in SUMO1); alternate linkage. A Glycyl lysine isopeptide (Lys-Gly) (interchain with G-Cter in SUMO2); alternate cross-link involves residue Lys-34. An interaction with ASFV p30 region spans residues 35 to 197; that stretch reads RSRNTDEMVE…STDRVVLIGG (163 aa). Ser-36 bears the Phosphoserine mark. Thr-39 bears the Phosphothreonine mark. A KH 1 domain is found at 42–104; the sequence is MVELRILLQS…ETIGEILKKI (63 aa). Glycyl lysine isopeptide (Lys-Gly) (interchain with G-Cter in SUMO2) cross-links involve residues Lys-52 and Lys-60. A run of 2 repeats spans residues 54–76 and 59–62. The 2 X 22 AA approximate repeats stretch occupies residues 54–421; it reads AGAVIGKGGK…QIRHESGASI (368 aa). A 5 X 4 AA repeats of G-X-G-G region spans residues 59–407; that stretch reads GKGGKNIKAL…LAGSIIGKGG (349 aa). Phosphoserine is present on residues Ser-75 and Ser-116. One can recognise a KH 2 domain in the interval 144–209; sequence DCELRLLIHQ…DRVVECIKII (66 aa). A Glycyl lysine isopeptide (Lys-Gly) (interchain with G-Cter in SUMO1); alternate cross-link involves residue Lys-163. Lys-163 participates in a covalent cross-link: Glycyl lysine isopeptide (Lys-Gly) (interchain with G-Cter in SUMO2); alternate. Position 198 is an N6-acetyllysine (Lys-198). Positions 209–337 are interaction with ZIK1; that stretch reads ILDLISESPI…RPGDRYDGMV (129 aa). Phosphoserine is present on residues Ser-214 and Ser-216. Lys-219 participates in a covalent cross-link: Glycyl lysine isopeptide (Lys-Gly) (interchain with G-Cter in SUMO2); alternate. An N6-succinyllysine; alternate modification is found at Lys-219. Residues 236–273 form an RNA-binding RGG-box region; sequence YGGFTMMFDDRRGRPVGFPMRGRGGFDRMPPGRGGRPM. Repeat copies occupy residues 245–250, 257–260, and 267–270. The interval 245 to 329 is 2 X 6 AA approximate repeats; sequence DRRGRPVGFP…LMAYDRRGRP (85 aa). The disordered stretch occupies residues 250–329; that stretch reads PVGFPMRGRG…LMAYDRRGRP (80 aa). Residues 252–266 show a composition bias toward low complexity; sequence GFPMRGRGGFDRMPP. The segment covering 276–285 has biased composition (basic and acidic residues); the sequence is SRRDYDDMSP. At Ser-284 the chain carries Phosphoserine. One copy of the 3-4 repeat lies at 295–298; that stretch reads GRGG. Arg-316 bears the Omega-N-methylarginine mark. A 2-2 repeat occupies 324-329; sequence DRRGRP. Arg-377 is subject to Omega-N-methylarginine. The residue at position 379 (Ser-379) is a Phosphoserine. A Phosphotyrosine modification is found at Tyr-380. The KH 3 domain occupies 387–451; the sequence is IITTQVTIPK…DQIQNAQYLL (65 aa). A run of 2 repeats spans residues 399–421 and 404–407. N6-acetyllysine; alternate is present on Lys-405. A Glycyl lysine isopeptide (Lys-Gly) (interchain with G-Cter in SUMO2); alternate cross-link involves residue Lys-405. A Phosphoserine modification is found at Ser-420. Lys-422 participates in a covalent cross-link: Glycyl lysine isopeptide (Lys-Gly) (interchain with G-Cter in SUMO1); alternate. Lys-422 is covalently cross-linked (Glycyl lysine isopeptide (Lys-Gly) (interchain with G-Cter in SUMO2); alternate). Lys-422 is covalently cross-linked (Glycyl lysine isopeptide (Lys-Gly) (interchain with G-Cter in SUMO); alternate).

As to quaternary structure, identified in the spliceosome C complex. Part of a transcription inhibitory ribonucleoprotein complex composed at least of the circular RNA circZNF827, ZNF827 and HNRNPL. Interacts with RBM42 and ZIK1. Interacts with BRDT. Interacts with ANKRD28. Interacts with ASFV p30 protein. Interacts with DDX1. Interacts with MDM2; this interaction leads to ubiquitination and proteasomal degradation. Interacts with p53/TP53. Interacts with IVNS1ABP (via BACK domain); the interaction is direct. Interacts with PPIA/CYPA. In terms of assembly, (Microbial infection) Interacts with HCV core protein. Arg-296 and Arg-299 are dimethylated, probably to asymmetric dimethylarginine. In terms of processing, sumoylated by CBX4. Sumoylation is increased upon DNA damage, such as that produced by doxorubicin, etoposide, UV light and camptothecin, due to enhanced CBX4 phosphorylation by HIPK2 under these conditions. Post-translationally, ubiquitinated by MDM2. Doxorubicin treatment does not affect monoubiquitination, but slightly decreases HNRNPK poly-ubiquitination. O-glycosylated (O-GlcNAcylated), in a cell cycle-dependent manner.

It is found in the cytoplasm. It localises to the nucleus. The protein localises to the nucleoplasm. The protein resides in the cell projection. Its subcellular location is the podosome. Its function is as follows. One of the major pre-mRNA-binding proteins. Binds tenaciously to poly(C) sequences. Likely to play a role in the nuclear metabolism of hnRNAs, particularly for pre-mRNAs that contain cytidine-rich sequences. Can also bind poly(C) single-stranded DNA. Plays an important role in p53/TP53 response to DNA damage, acting at the level of both transcription activation and repression. When sumoylated, acts as a transcriptional coactivator of p53/TP53, playing a role in p21/CDKN1A and 14-3-3 sigma/SFN induction. As far as transcription repression is concerned, acts by interacting with long intergenic RNA p21 (lincRNA-p21), a non-coding RNA induced by p53/TP53. This interaction is necessary for the induction of apoptosis, but not cell cycle arrest. As part of a ribonucleoprotein complex composed at least of ZNF827, HNRNPL and the circular RNA circZNF827 that nucleates the complex on chromatin, may negatively regulate the transcription of genes involved in neuronal differentiation. In Homo sapiens (Human), this protein is Heterogeneous nuclear ribonucleoprotein K (HNRNPK).